A 150-amino-acid chain; its full sequence is NADH-quinone oxidoreductase subunit A (150 aa).

The next 3 helical transmembrane spans lie at 14-34, 70-90, and 98-118; these read WAFA…LLGA, LVAM…AWAV, and LGFI…FYLV.

This sequence belongs to the complex I subunit 3 family. As to quaternary structure, NDH-1 is composed of 13 different subunits. Subunits NuoA, H, J, K, L, M, N constitute the membrane sector of the complex.

Its subcellular location is the cell inner membrane. It carries out the reaction a quinone + NADH + 5 H(+)(in) = a quinol + NAD(+) + 4 H(+)(out). In terms of biological role, NDH-1 shuttles electrons from NADH, via FMN and iron-sulfur (Fe-S) centers, to quinones in the respiratory chain. The immediate electron acceptor for the enzyme in this species is believed to be ubiquinone. Couples the redox reaction to proton translocation (for every two electrons transferred, four hydrogen ions are translocated across the cytoplasmic membrane), and thus conserves the redox energy in a proton gradient. This chain is NADH-quinone oxidoreductase subunit A, found in Proteus mirabilis (strain HI4320).